The following is a 679-amino-acid chain: Patatin-like phospholipase 1 (679 aa).

Disordered regions lie at residues 19 to 45 and 155 to 194; these read FSDDEKDDSYEREKQVYSGSETQNAEN and GEYEKRNTSSYDNTESVQNTVGSEKEETENKNEETSNYNS. Composition is skewed to polar residues over residues 35–45 and 162–176; these read YSGSETQNAEN and TSSYDNTESVQNTVG. The span at 177 to 188 shows a compositional bias: basic and acidic residues; sequence SEKEETENKNEE. A PNPLA domain is found at 338-544; it reads LSLDGGGILT…KASNPALIAL (207 aa). A GXSXG motif is present at residues 381–385; sequence GTSAG. Catalysis depends on Ser-383, which acts as the Nucleophile. Residue Asp-531 is the Proton acceptor of the active site. Positions 531–533 match the DGA/G motif; the sequence is DGA.

This sequence belongs to the patatin family.

The protein localises to the cytoplasm. It catalyses the reaction a 1,2-diacyl-sn-glycero-3-phosphocholine + H2O = a 1-acyl-sn-glycero-3-phosphocholine + a fatty acid + H(+). It carries out the reaction 1,2-dihexadecanoyl-sn-glycero-3-phosphocholine + H2O = 1-hexadecanoyl-sn-glycero-3-phosphocholine + hexadecanoate + H(+). Hydrolyzes the ester bond of the fatty acyl group attached at the sn-2 position of phospholipids such as phosphatidylcholine. Involved in gametogenesis; however, it is not clear whether it is involved in gametocytes development in host erythrocytes or in gametocyte activation in the mosquito midgut. Involved in gametocyte development in host erythrocytes; however, not involved in gametocytes activation including male gamete exflagellation. Involved in the rounding up of gametocytes following activation in the mosquito midgut; however, not required for gametocyte development in host erythrocytes. Required for exflagellation of activated male gametocytes. Involved in gametocytes egress from host erythrocytes by promoting the relocalization of perforin-like protein PLP2-containing vesicles to the periphery of gametocytes; PLP2 secretion is required for permeabilization of the erythrocyte membrane and thus, promotes gametocyte egress. Dispensable for asexual blood stage development. This is Patatin-like phospholipase 1 from Plasmodium falciparum (isolate NF54).